The following is a 224-amino-acid chain: 7-cyano-7-deazaguanine synthase (224 aa).

12–22 lines the ATP pocket; the sequence is LSGGLDSSTVT. Residues C193, C201, C204, and C207 each coordinate Zn(2+).

This sequence belongs to the QueC family. Zn(2+) serves as cofactor.

It carries out the reaction 7-carboxy-7-deazaguanine + NH4(+) + ATP = 7-cyano-7-deazaguanine + ADP + phosphate + H2O + H(+). It participates in purine metabolism; 7-cyano-7-deazaguanine biosynthesis. Functionally, catalyzes the ATP-dependent conversion of 7-carboxy-7-deazaguanine (CDG) to 7-cyano-7-deazaguanine (preQ(0)). The polypeptide is 7-cyano-7-deazaguanine synthase (Prochlorococcus marinus (strain MIT 9301)).